The following is a 393-amino-acid chain: Phospho-N-acetylmuramoyl-pentapeptide-transferase (393 aa).

10 consecutive transmembrane segments (helical) span residues 29 to 49, 75 to 95, 101 to 121, 138 to 158, 193 to 213, 226 to 246, 263 to 283, 290 to 310, 315 to 335, and 370 to 390; these read RAVMAAMTALLIGLALGPIVI, TPTMGGALILLAIAISTLLWF, FVWIVMIVTFGFGAIGWVDDW, YFWQSLIGLVAALYLAFSVSE, SISYPLGVFGFIFLTYVVIVG, GLAIMPVVMVGSALGIFAYAT, AGELMIFCAAMAGAGLAFLWF, VFMGDVGALALGGALGTIAVI, VVLAIMGGIFVLEALSVMAQV, and QVVVRFWIITMLLCLVGLSSL.

Belongs to the glycosyltransferase 4 family. MraY subfamily. The cofactor is Mg(2+).

The protein localises to the cell inner membrane. It catalyses the reaction UDP-N-acetyl-alpha-D-muramoyl-L-alanyl-gamma-D-glutamyl-meso-2,6-diaminopimeloyl-D-alanyl-D-alanine + di-trans,octa-cis-undecaprenyl phosphate = di-trans,octa-cis-undecaprenyl diphospho-N-acetyl-alpha-D-muramoyl-L-alanyl-D-glutamyl-meso-2,6-diaminopimeloyl-D-alanyl-D-alanine + UMP. It participates in cell wall biogenesis; peptidoglycan biosynthesis. Its function is as follows. Catalyzes the initial step of the lipid cycle reactions in the biosynthesis of the cell wall peptidoglycan: transfers peptidoglycan precursor phospho-MurNAc-pentapeptide from UDP-MurNAc-pentapeptide onto the lipid carrier undecaprenyl phosphate, yielding undecaprenyl-pyrophosphoryl-MurNAc-pentapeptide, known as lipid I. The sequence is that of Phospho-N-acetylmuramoyl-pentapeptide-transferase from Methylibium petroleiphilum (strain ATCC BAA-1232 / LMG 22953 / PM1).